We begin with the raw amino-acid sequence, 395 residues long: Cytoplasmic 60S subunit biogenesis factor REI1 homolog 2 (395 aa).

C2H2-type zinc fingers lie at residues 4–28 (LACN…SEWH), 68–92 (YSCG…SKSH), 171–194 (ACCL…HKFH), and 222–249 (FVCL…AKGH).

The protein belongs to the REI1 family. Can form homodimer. Interacts with RLP24, RLP24A, RPL24B, EBP1 and JJJ1.

The protein resides in the cytoplasm. Functionally, pre-60S-associated factor involved in the cytoplasmic maturation of the 60S subunit. Involved in the dissociation and recycling of other late pre-60S factors before newly synthesized large ribosomal subunits enter translation. Can complement the growth defect of a yeast mutant lacking REI1. Required for leaf growth under cold temperature conditions. The sequence is that of Cytoplasmic 60S subunit biogenesis factor REI1 homolog 2 from Arabidopsis thaliana (Mouse-ear cress).